The chain runs to 491 residues: MATFKDACYHYKKLNKLNNLVLKLGANDEWRPAPVTKYKGWCLDCCQYTNLTYCRGCALYHVCQWCSQYNRCFLDEEPHLLRMRTFKDAVTKEDIEGLLTMYETLFPINEKLVNKFINSVKQRKCRNEYLLEWYNHLLMPITLQALTINLEDNVYHIFGYYDCMEHENQTPFQFINLLEKYDKLLLDDRNFNRMSHLPVILQQEYALRYFSKSRFLSKGKKRLSRNDFSDNLMEDRHSPTSLMQVVRNCISIHINDCEWNKACTLIFDARNYISIMNSSYTEHYSVSQRCKLFTKYKFGIVSRLVKPNYIFSSHESCALNVHNCKWCQINNHYKVWEDFRLRKIYNNIMDFIRALVKSNGNVGHCSSQESVYEYISDLFLICKTGKWNEAVEMLFNYLEPVDINGTEYVLLDYEVNWEVRGLVMQNMDGKVPRILNMNDTKKILSAMIFDWFDTRYMRETPMTTSTTNQLRTLNKRNELIDEYDLELSDVE.

Residues M1–L81 form an RNA-binding region. Positions C42–H79 are zinc-binding domain. Residues R82 to N176 are important for cytoskeleton localization. The segment at N320 to E491 is interaction with host IRF3. The pLxIS motif signature appears at L485–S488.

The protein belongs to the rotavirus NSP1 family. As to quaternary structure, interacts (via C-terminus) with host IRF3; this interaction leads to IRF3 degradation. Interacts with host IRF7; this interaction leads to IRF7 degradation. Interacts with host CUL1 and CUL3.

The protein localises to the host cytoplasm. Its subcellular location is the host cytoskeleton. Its function is as follows. Plays a role in the inhibition of host innate immunity by inducing the degradation of key host factors required to activate interferon production such as IRF3, IRF5 or IRF7. Associates with components of cullin RING ligases (CRLs) including CUL1 or CUL3, which are essential multisubunit ubiquitination complexes, to modulate their activities. This is Non-structural protein 1 from Homo sapiens (Human).